A 118-amino-acid chain; its full sequence is Large ribosomal subunit protein bL20 (118 aa).

Belongs to the bacterial ribosomal protein bL20 family.

Binds directly to 23S ribosomal RNA and is necessary for the in vitro assembly process of the 50S ribosomal subunit. It is not involved in the protein synthesizing functions of that subunit. The chain is Large ribosomal subunit protein bL20 from Pseudomonas fluorescens (strain ATCC BAA-477 / NRRL B-23932 / Pf-5).